Here is a 206-residue protein sequence, read N- to C-terminus: Probable glutathione S-transferase 7 (206 aa).

The GST N-terminal domain maps to 2 to 79 (VHYKVSYFPI…YLARQFGING (78 aa)). Residues tyrosine 8, tryptophan 39, lysine 43, 49–51 (GQL), and 63–64 (QS) contribute to the glutathione site. One can recognise a GST C-terminal domain in the interval 81–206 (CAWEEAQVNS…WLETRPVTPF (126 aa)).

This sequence belongs to the GST superfamily. Sigma family.

It carries out the reaction RX + glutathione = an S-substituted glutathione + a halide anion + H(+). Functionally, conjugation of reduced glutathione to a wide number of exogenous and endogenous hydrophobic electrophiles. May play a role in the detoxification of reactive oxygen species produced during pathogenic bacterial infection. The protein is Probable glutathione S-transferase 7 (gst-7) of Caenorhabditis elegans.